A 449-amino-acid polypeptide reads, in one-letter code: MSSSHGYRASWWTYILHQVPHTNFQFEVVDNQFAPQEWPYQQALLFLASIAGLCLAISLILICVYLIRFCCCSSQEDDDSKSHRVCCVTWSCVAAVIICCAGIGIGFYGNSETNDGVYQVTYSLMNANHTLTSINLLISDTVELLSSVVRSDLTQLEEIFSKRTEFLVMIRNTRRQVESVAQQLAEISFWKGPEPNPNALAEQVNFIEDYRWLAYILLLLLDLIICLFTLLGLAKQIKWLVIVMTVVSFFVLLLSWGSMGLEMATAVGLSDFCSDPDAYVMNQTQAITNINPDILQYYISCNQDVTNPFRQRLTMSQRALSNIHSQLHGLEREAVPQFPTAEKNLLVVQGMLNTTEGNFHHLVALLNCRGLHKDYVDALKGLCYDGMEGILFLLLFSFLSALSFTAAICSLPRAWKRFQNRDLDYDDMDEDDPFNPQESKRFVQWQSSI.

At 1 to 43 (MSSSHGYRASWWTYILHQVPHTNFQFEVVDNQFAPQEWPYQQA) the chain is on the extracellular side. The helical transmembrane segment at 44–64 (LLFLASIAGLCLAISLILICV) threads the bilayer. Residues 65-86 (YLIRFCCCSSQEDDDSKSHRVC) are Cytoplasmic-facing. The chain crosses the membrane as a helical span at residues 87–107 (CVTWSCVAAVIICCAGIGIGF). Topologically, residues 108–212 (YGNSETNDGV…QVNFIEDYRW (105 aa)) are extracellular. The N-linked (GlcNAc...) asparagine glycan is linked to Asn128. A helical membrane pass occupies residues 213–233 (LAYILLLLLDLIICLFTLLGL). Over 234–238 (AKQIK) the chain is Cytoplasmic. The helical transmembrane segment at 239–259 (WLVIVMTVVSFFVLLLSWGSM) threads the bilayer. At 260–388 (GLEMATAVGL…LKGLCYDGME (129 aa)) the chain is on the extracellular side. Disulfide bonds link Cys273/Cys383 and Cys301/Cys368. Residues Asn282 and Asn353 are each glycosylated (N-linked (GlcNAc...) asparagine). A helical transmembrane segment spans residues 389–409 (GILFLLLFSFLSALSFTAAIC). Residues 410 to 449 (SLPRAWKRFQNRDLDYDDMDEDDPFNPQESKRFVQWQSSI) lie on the Cytoplasmic side of the membrane.

Belongs to the tweety family. As to quaternary structure, homotetramer; disulfide-linked. Homodimer.

The protein localises to the cell membrane. The catalysed reaction is chloride(in) = chloride(out). It carries out the reaction L-glutamate(out) = L-glutamate(in). May act as a calcium-independent, swelling-dependent volume-regulated anion channel (VRAC-swell) which plays a pivotal role in the process of regulatory volume decrease (RVD) in the brain through the efflux of anions like chloride and organic osmolytes like glutamate. The sequence is that of Protein tweety homolog 1 (ttyh1) from Xenopus tropicalis (Western clawed frog).